Consider the following 676-residue polypeptide: Methionine--tRNA ligase (676 aa).

The 'HIGH' region motif lies at 15–25 (PYANGSIHLGH). Positions 146, 149, 159, and 162 each coordinate Zn(2+). A 'KMSKS' region motif is present at residues 332–336 (KMSKS). Residue Lys-335 coordinates ATP. Residues 574–676 (DFAKVDMRIA…SGAQPGMQVK (103 aa)) form the tRNA-binding domain.

This sequence belongs to the class-I aminoacyl-tRNA synthetase family. MetG type 1 subfamily. Homodimer. It depends on Zn(2+) as a cofactor.

It localises to the cytoplasm. It catalyses the reaction tRNA(Met) + L-methionine + ATP = L-methionyl-tRNA(Met) + AMP + diphosphate. In terms of biological role, is required not only for elongation of protein synthesis but also for the initiation of all mRNA translation through initiator tRNA(fMet) aminoacylation. The protein is Methionine--tRNA ligase of Pectobacterium atrosepticum (strain SCRI 1043 / ATCC BAA-672) (Erwinia carotovora subsp. atroseptica).